A 286-amino-acid chain; its full sequence is MVKKIHFVMERHASIVAFLLAVLALTESQAFTSVKLPRDEHWPYNYVSVGPAGVWAVNRQNKLFYRTGTYGDNANMGSGWQFKQDGVGQVDVGKDKVGYINLSGGSLFRIEGISQANPVGGTPKSWEWWTKYIGMSLREDTRFSSRIENQNKVLTFTFRTCFWASRITNWCFADSSYTETVTAGGSGTWITKSQLKYKSGTFGNPDTEGGDWILVDSGSFQHVSSGSGVVLAVRSNGELVQRTGITCSLPQGTGWTSMLNSMSRVDTYGTVAWAVDTAGDLYFINL.

The first 30 residues, 1–30, serve as a signal peptide directing secretion; it reads MVKKIHFVMERHASIVAFLLAVLALTESQA. N-linked (GlcNAc...) asparagine glycosylation is present at Asn-101.

It belongs to the tectonin family. In terms of assembly, perivitellin-2 is a dimer of heterodimers held together head-to-tail by non-covalent forces. The heterodimer is composed of the tachylectin subunit (31 kDa) and the MACPF subunit (67 kDa) that are disulfide-linked. PV2 is a very high density lipoprotein (VHDL). It contains 3.75% of lipids. The major lipid classes are free sterols and phospholipids and also have significant quantities of energy-providing triacylglycerides and free fatty acids. In terms of tissue distribution, produced by albumen secretory cells. Found in developing eggs.

Its subcellular location is the secreted. The protein resides in the target cell membrane. The egg defensive protein perivitellin-2 is a pore-forming two-subunit glycoprotein that affects both the nervous and digestive systems of mammals. In addition, it is a source of both structural and energetic molecules during embryonic development. The tachylectin subunit (31 kDa) binds target membranes while the MACPF subunit (67 kDa) disrupts lipid bilayers forming large pores (inner diameter of about 5.6 nm) altering the plasma membrance conductance. Both in vivo and in vitro, the protein shows wide pH range stability and is resistant to enzymatic proteolysis from gastrointestinal environments. It is cytotoxic to both epithelial and immune cells from the digestive system of mammals. It induces enterocyte death by a lytic mechanism and disrupts enterocyte monolayers in a dose-dependent manner. After oral administration to mice, it binds enterocytes and induces large dose-dependent morphological changes on their small intestine mucosa, reducing the absorptive surface. Additionally, it is detected in the Peyer's patches where it activates lymphoid follicles and triggers apoptosis. The toxin can also traverse the intestinal barrier and induce oral adaptive immunity with evidence of circulating antibody response. The toxin also shows hemagglutination properties thanks to the tachylectin subunit, but has no hemolytic activity. In addition to enterotoxin activity, the toxin also acts as a neurotoxin, since an intraperitoneal injection can induce paralysis of the mice rear limbs, followed by death. The polypeptide is Perivitellin-2 31 kDa subunit (Pomacea maculata (Giant applesnail)).